A 372-amino-acid chain; its full sequence is NAD(P)H-quinone oxidoreductase subunit 1 (372 aa).

Helical transmembrane passes span 27–47 (VLWMPLPMLLMIIAATVGVLV), 97–117 (FLFTIGPALVVIPVFLSYLIV), 128–148 (VGAGVFLWIALSSIQPIGLLM), 176–196 (LALAVLAVVMMSNSLSTIDIV), 204–224 (ILGWNIWRQPVGFIIFWIAAL), 254–274 (FALFYVGSYVNLILSALLVSI), 308–328 (ALGITMTVLKAYLLVFTAILL), and 347–367 (FLLPISLVNLLVTAALKLTFP).

It belongs to the complex I subunit 1 family. In terms of assembly, NDH-1 is composed of at least 11 different subunits.

It localises to the cellular thylakoid membrane. The enzyme catalyses a plastoquinone + NADH + (n+1) H(+)(in) = a plastoquinol + NAD(+) + n H(+)(out). The catalysed reaction is a plastoquinone + NADPH + (n+1) H(+)(in) = a plastoquinol + NADP(+) + n H(+)(out). Functionally, NDH-1 shuttles electrons from an unknown electron donor, via FMN and iron-sulfur (Fe-S) centers, to quinones in the respiratory and/or the photosynthetic chain. The immediate electron acceptor for the enzyme in this species is believed to be plastoquinone. Couples the redox reaction to proton translocation, and thus conserves the redox energy in a proton gradient. This is NAD(P)H-quinone oxidoreductase subunit 1 from Synechococcus elongatus (strain ATCC 33912 / PCC 7942 / FACHB-805) (Anacystis nidulans R2).